The sequence spans 66 residues: Ocellatin-PT4 (66 aa).

Residues 1-22 form the signal peptide; sequence MAFLKKSLFLVLFLGLVSLSIC. The propeptide occupies 23–39; that stretch reads DEEKRQDEDDDDDDDEE. The residue at position 66 (V66) is a Valine amide.

In terms of tissue distribution, expressed by the skin glands.

It is found in the secreted. In terms of biological role, has antibacterial activity against Gram-negative bacteria E.coli ATCC 25922 (MIC=80 uM), K.pneumoniae ATCC 700603 (MIC=310 uM) and S.choleraesuis ATCC 14028 (MIC=310 uM). Shows no hemolytic activity and no cytotoxicity. This Leptodactylus pustulatus (Ceara white-lipped frog) protein is Ocellatin-PT4.